Consider the following 255-residue polypeptide: GTP cyclohydrolase FolE2 (255 aa).

It belongs to the GTP cyclohydrolase IV family.

The catalysed reaction is GTP + H2O = 7,8-dihydroneopterin 3'-triphosphate + formate + H(+). It participates in cofactor biosynthesis; 7,8-dihydroneopterin triphosphate biosynthesis; 7,8-dihydroneopterin triphosphate from GTP: step 1/1. Its function is as follows. Converts GTP to 7,8-dihydroneopterin triphosphate. The protein is GTP cyclohydrolase FolE2 of Syntrophus aciditrophicus (strain SB).